Here is a 176-residue protein sequence, read N- to C-terminus: CDP-archaeol synthase (176 aa).

The next 4 helical transmembrane spans lie at 41 to 61 (GLIG…FLYN), 73 to 93 (IITV…KSYF), 114 to 134 (VVGS…LNWF), and 138 to 158 (FDSV…SPLL).

The protein belongs to the CDP-archaeol synthase family. Requires Mg(2+) as cofactor.

The protein resides in the cell membrane. The catalysed reaction is 2,3-bis-O-(geranylgeranyl)-sn-glycerol 1-phosphate + CTP + H(+) = CDP-2,3-bis-O-(geranylgeranyl)-sn-glycerol + diphosphate. The protein operates within membrane lipid metabolism; glycerophospholipid metabolism. Functionally, catalyzes the formation of CDP-2,3-bis-(O-geranylgeranyl)-sn-glycerol (CDP-archaeol) from 2,3-bis-(O-geranylgeranyl)-sn-glycerol 1-phosphate (DGGGP) and CTP. This reaction is the third ether-bond-formation step in the biosynthesis of archaeal membrane lipids. This chain is CDP-archaeol synthase, found in Methanocorpusculum labreanum (strain ATCC 43576 / DSM 4855 / Z).